Consider the following 820-residue polypeptide: Phenylalanine--tRNA ligase beta subunit (820 aa).

The tRNA-binding domain maps to 42 to 154; that stretch reads KGGLEGLVIG…EDAVPGTLAK (113 aa). A B5 domain is found at 413 to 489; the sequence is AQDFIVELTY…RIYGYNNVEI (77 aa). Mg(2+) is bound by residues Asp467, Asp473, Glu476, and Asp477. The FDX-ACB domain occupies 727–820; sequence SKFPAVKRDL…LEDKLGAKLR (94 aa).

The protein belongs to the phenylalanyl-tRNA synthetase beta subunit family. Type 1 subfamily. Tetramer of two alpha and two beta subunits. Mg(2+) serves as cofactor.

The protein resides in the cytoplasm. The catalysed reaction is tRNA(Phe) + L-phenylalanine + ATP = L-phenylalanyl-tRNA(Phe) + AMP + diphosphate + H(+). The polypeptide is Phenylalanine--tRNA ligase beta subunit (Bacteroides fragilis (strain YCH46)).